The chain runs to 433 residues: Pyroglutamylated RF-amide peptide receptor (433 aa).

At 1–46 (MQALNITAEQFSRLLSAHNLTREQFIHRYGLRPLVYTPELPARAKL) the chain is on the extracellular side. Asparagine 5 and asparagine 19 each carry an N-linked (GlcNAc...) asparagine glycan. A helical membrane pass occupies residues 47–67 (AFALAGALIFALALFGNSLVI). The Cytoplasmic segment spans residues 68–81 (YVVTRSKAMRTVTN). Residues 82–102 (IFICSLALSDLLIAFFCIPVT) traverse the membrane as a helical segment. Topologically, residues 103–120 (MLQNISDKWLGGAFICKM) are extracellular. Residues 121–141 (VPFVQSTAVVTEILTMTCIAV) form a helical membrane-spanning segment. Topologically, residues 142–162 (ERHQGLIHPFKMKWQYTTRRA) are cytoplasmic. Residues 163-183 (FTILGVVWLAAIIVGSPMWHV) traverse the membrane as a helical segment. The Extracellular portion of the chain corresponds to 184–212 (QRLEIKYDFLYEKEHVCCLEEWASPMHQR). The helical transmembrane segment at 213–233 (IYTTFILVILFLLPLVVMLVL) threads the bilayer. Residues 234–271 (YSKIGYELWIKKRVGDSSALQTIHGKEMSKIARKKKRA) lie on the Cytoplasmic side of the membrane. A helical membrane pass occupies residues 272–292 (VVMMVTVVALFAACWAPFHVV). Residues 293-313 (HMMVEYSNFEKEYDDVTIKMV) are Extracellular-facing. A helical membrane pass occupies residues 314–334 (FAVAQTIGFFNSICNPFVYAF). Over 335–433 (MNENFKKNFL…NSTFGSGHEL (99 aa)) the chain is Cytoplasmic.

Belongs to the G-protein coupled receptor 1 family. Expressed widely in the brain with high levels in the cortex and hypothalamus, and moderate levels in the brain stem, caudate nucleus, midbrain hippocampus, thalamus, trigeminal ganglia and spinal cord. Particularly strong expression detected in the mitral cell layer of the olfactory bulb, accessory olfactory bulb, island of Calleja and nucleus of the solitary tract. In peripheral tissues, expressed at moderate levels in the eye, liver, kidney, pituitary gland, testis and thymus.

It localises to the cell membrane. In terms of biological role, receptor for the orexigenic neuropeptide QRFP. The activity of this receptor is mediated by G proteins that modulate adenylate cyclase activity and intracellular calcium levels. This is Pyroglutamylated RF-amide peptide receptor (Qrfpr) from Mus musculus (Mouse).